A 436-amino-acid polypeptide reads, in one-letter code: GTPase Der (436 aa).

EngA-type G domains are found at residues 4-167 and 175-351; these read PVIA…PTDL and IKFS…ENQN. GTP-binding positions include 10-17, 57-61, 119-122, 181-188, 229-233, and 294-297; these read GRPNVGKS, DTGGI, NKAD, DTAGI, and NKWD. A KH-like domain is found at 352 to 436; it reads RRIQSALLND…PIHLIPRQRK (85 aa).

It belongs to the TRAFAC class TrmE-Era-EngA-EngB-Septin-like GTPase superfamily. EngA (Der) GTPase family. Associates with the 50S ribosomal subunit.

GTPase that plays an essential role in the late steps of ribosome biogenesis. The chain is GTPase Der from Latilactobacillus sakei subsp. sakei (strain 23K) (Lactobacillus sakei subsp. sakei).